A 343-amino-acid chain; its full sequence is C5a anaphylatoxin chemotactic receptor 2 (343 aa).

At 1–44 (MLNDTTSKDYEYEYDQEQYSDLLNVPVDCPAGNCFSNDAYLIVL) the chain is on the extracellular side. The N-linked (GlcNAc...) asparagine glycan is linked to Asn-3. A helical transmembrane segment spans residues 45–67 (LGLYSVIFLVGVPGNTLLAWVTW). The Cytoplasmic portion of the chain corresponds to 68 to 78 (KESRHRLGASW). The helical transmembrane segment at 79 to 101 (FLHLTMADLLCCVSLPFLAVPIA) threads the bilayer. The Extracellular segment spans residues 102–120 (QKGHWPYGTAGCWLLSSIT). Cys-113 and Cys-192 are oxidised to a cystine. Residues 121-143 (VLSMYASVLLLTGLSGDLFLLAF) traverse the membrane as a helical segment. Residues 144–155 (RPSWKNADQRTC) lie on the Cytoplasmic side of the membrane. The chain crosses the membrane as a helical span at residues 156-178 (GVRVVQVSSWMLALLLTVPGAVY). The Extracellular portion of the chain corresponds to 179 to 208 (RKLLQEHYPPRLVCGTNYGGSVTAEVTITT). A helical transmembrane segment spans residues 209 to 231 (VRFLFGFLVPLVFMASCHGILQR). Residues 232–243 (QMARRHWPLGTA) lie on the Cytoplasmic side of the membrane. Residues 244–266 (VVVGFFICWTPFHLLRVIIAVAS) form a helical membrane-spanning segment. At 267 to 280 (SHSPLLAWALEAEP) the chain is on the extracellular side. The chain crosses the membrane as a helical span at residues 281 to 300 (LVTGLALAHSALNPIMFLYF). At 301–343 (GRKQLCKSLQAACHWALRDLQDEEESAVTKVSTSQEMVSEMPV) the chain is on the cytoplasmic side. Residue Ser-326 is modified to Phosphoserine.

The protein belongs to the G-protein coupled receptor 1 family. As to quaternary structure, interacts with C3 (the anaphylatoxin peptide C3a and the adipogenic hormone ASP); the interaction occurs with higher affinity for ASP, enhancing the phosphorylation and activation of GPR77, recruitment of ARRB2 to the cell surface and endocytosis of GRP77.

The protein resides in the cell membrane. Its function is as follows. Receptor for the chemotactic and inflammatory C3a, C4a and C5a anaphylatoxin peptides and also for their dearginated forms ASP/C3adesArg, C4adesArg and C5adesArg respectively. Couples weakly to G(i)-mediated signaling pathways. This is C5a anaphylatoxin chemotactic receptor 2 (C5ar2) from Rattus norvegicus (Rat).